The chain runs to 86 residues: uncharacterized protein (86 aa).

The first 22 residues, methionine 1–alanine 22, serve as a signal peptide directing secretion.

The protein belongs to the BhsA/McbA family.

It is found in the periplasm. This is an uncharacterized protein from Escherichia coli O6:H1 (strain CFT073 / ATCC 700928 / UPEC).